A 461-amino-acid chain; its full sequence is Bifunctional protein GlmU (461 aa).

Positions 1–229 are pyrophosphorylase; the sequence is MNKYVVILAA…FSESLGVNDR (229 aa). Residues 8-11, Lys22, Gln72, and 77-78 each bind UDP-N-acetyl-alpha-D-glucosamine; these read LAAG and GT. Asp102 contributes to the Mg(2+) binding site. Gly139, Glu154, Asn169, and Asn227 together coordinate UDP-N-acetyl-alpha-D-glucosamine. Residue Asn227 participates in Mg(2+) binding. The tract at residues 230-250 is linker; that stretch reads IALAQATKIMQRRINEEHMKN. The interval 251–461 is N-acetyltransferase; the sequence is GVSFIDPDTA…LPLSKDKEWE (211 aa). Arg332 and Lys350 together coordinate UDP-N-acetyl-alpha-D-glucosamine. The Proton acceptor role is filled by His362. Residues Tyr365 and Asn376 each contribute to the UDP-N-acetyl-alpha-D-glucosamine site. Residues 385-386, Ala422, and Arg439 each bind acetyl-CoA; that span reads NY.

In the N-terminal section; belongs to the N-acetylglucosamine-1-phosphate uridyltransferase family. The protein in the C-terminal section; belongs to the transferase hexapeptide repeat family. Homotrimer. Requires Mg(2+) as cofactor.

The protein resides in the cytoplasm. It catalyses the reaction alpha-D-glucosamine 1-phosphate + acetyl-CoA = N-acetyl-alpha-D-glucosamine 1-phosphate + CoA + H(+). It carries out the reaction N-acetyl-alpha-D-glucosamine 1-phosphate + UTP + H(+) = UDP-N-acetyl-alpha-D-glucosamine + diphosphate. The protein operates within nucleotide-sugar biosynthesis; UDP-N-acetyl-alpha-D-glucosamine biosynthesis; N-acetyl-alpha-D-glucosamine 1-phosphate from alpha-D-glucosamine 6-phosphate (route II): step 2/2. Its pathway is nucleotide-sugar biosynthesis; UDP-N-acetyl-alpha-D-glucosamine biosynthesis; UDP-N-acetyl-alpha-D-glucosamine from N-acetyl-alpha-D-glucosamine 1-phosphate: step 1/1. It functions in the pathway bacterial outer membrane biogenesis; LPS lipid A biosynthesis. Its function is as follows. Catalyzes the last two sequential reactions in the de novo biosynthetic pathway for UDP-N-acetylglucosamine (UDP-GlcNAc). The C-terminal domain catalyzes the transfer of acetyl group from acetyl coenzyme A to glucosamine-1-phosphate (GlcN-1-P) to produce N-acetylglucosamine-1-phosphate (GlcNAc-1-P), which is converted into UDP-GlcNAc by the transfer of uridine 5-monophosphate (from uridine 5-triphosphate), a reaction catalyzed by the N-terminal domain. The protein is Bifunctional protein GlmU of Lactobacillus gasseri (strain ATCC 33323 / DSM 20243 / BCRC 14619 / CIP 102991 / JCM 1131 / KCTC 3163 / NCIMB 11718 / NCTC 13722 / AM63).